The chain runs to 111 residues: Large ribosomal subunit protein eL34B (111 aa).

Residue Tyr-76 is modified to Phosphotyrosine.

This sequence belongs to the eukaryotic ribosomal protein eL34 family. Component of the large ribosomal subunit (LSU). Mature yeast ribosomes consist of a small (40S) and a large (60S) subunit. The 40S small subunit contains 1 molecule of ribosomal RNA (18S rRNA) and at least 33 different proteins. The large 60S subunit contains 3 rRNA molecules (25S, 5.8S and 5S rRNA) and at least 46 different proteins.

The protein resides in the cytoplasm. It localises to the nucleus. Its subcellular location is the nucleolus. Functionally, component of the ribosome, a large ribonucleoprotein complex responsible for the synthesis of proteins in the cell. The small ribosomal subunit (SSU) binds messenger RNAs (mRNAs) and translates the encoded message by selecting cognate aminoacyl-transfer RNA (tRNA) molecules. The large subunit (LSU) contains the ribosomal catalytic site termed the peptidyl transferase center (PTC), which catalyzes the formation of peptide bonds, thereby polymerizing the amino acids delivered by tRNAs into a polypeptide chain. The nascent polypeptides leave the ribosome through a tunnel in the LSU and interact with protein factors that function in enzymatic processing, targeting, and the membrane insertion of nascent chains at the exit of the ribosomal tunnel. This chain is Large ribosomal subunit protein eL34B (rpl3402), found in Schizosaccharomyces pombe (strain 972 / ATCC 24843) (Fission yeast).